The chain runs to 591 residues: UvrABC system protein C (591 aa).

A GIY-YIG domain is found at 14–91; that stretch reads DSPGCYLHKD…IQKNMPKYNI (78 aa). Residues 196 to 231 enclose the UVR domain; sequence DKIVTGLKEKMLAASQAMEFERAAEYRDLISGIATL.

Belongs to the UvrC family. In terms of assembly, interacts with UvrB in an incision complex.

Its subcellular location is the cytoplasm. Functionally, the UvrABC repair system catalyzes the recognition and processing of DNA lesions. UvrC both incises the 5' and 3' sides of the lesion. The N-terminal half is responsible for the 3' incision and the C-terminal half is responsible for the 5' incision. The protein is UvrABC system protein C of Streptococcus uberis (strain ATCC BAA-854 / 0140J).